Reading from the N-terminus, the 255-residue chain is Tabinhibitin 7 (255 aa).

An N-terminal signal peptide occupies residues 1–23; the sequence is MTSILVSSFLLATLVLQYATIDA. The Cell attachment site signature appears at 32-34; the sequence is RGD. One can recognise an SCP domain in the interval 67-211; the sequence is LSKINDVRDH…KARALLTCNF (145 aa).

The protein belongs to the CRISP family. In terms of tissue distribution, expressed in salivary glands.

The protein localises to the secreted. Functionally, inhibits platelet aggregation induced by all agonists tested (ADP, arachidonic acid, the thromboxane A2 analog U46619, thrombin, and snake venom snaclecs (TMVA that activates platelet through GPIB, and stejnulxin that specifically acts through GPVI (GP6))). May act by competing with fibrinogen for binding to glycoprotein IIb/IIIa (ITGA2B/ITGB3). This is Tabinhibitin 7 from Tabanus yao (Horsefly).